The primary structure comprises 718 residues: Kinesin-like protein KIF2C (718 aa).

A globular region spans residues 1–248; the sequence is MESLPARLFP…CHPLTLTDPT (248 aa). 2 positions are modified to phosphoserine: serine 3 and serine 19. Residues 86-111 form a disordered region; the sequence is PKQKRRSVNSKIPAPKEGLRSRSTRM. Serine 92 carries the phosphoserine; by AURKB modification. The Microtubule tip localization signal motif lies at 95–98; that stretch reads SKIP. Serine 106, serine 108, serine 112, serine 163, and serine 186 each carry phosphoserine. Residues 201–232 are negative regulator of microtubule-binding; it reads EKRAQNSEIRIKRAQEYDSSFPNWEFARMIKE. In terms of domain architecture, Kinesin motor spans 252–582; sequence RICVCVRKRP…LRYADRVKEL (331 aa). Residues arginine 258 and 342-349 contribute to the ATP site; that span reads GQTGSGKT. Positions 409–412 match the Nuclear localization signal motif; that stretch reads KKAK. Phosphoserine is present on residues serine 513 and serine 626. Coiled-coil stretches lie at residues 613-651 and 689-716; these read NFKEEEELSSQMSSFNEAMSQIRELEERAMEELREIIQQ and ALREVIKALRVAMQLEEQASKQMNSKKR.

It belongs to the TRAFAC class myosin-kinesin ATPase superfamily. Kinesin family. MCAK/KIF2 subfamily. Interacts with CENPH. Interacts with MTUS2/TIP150; the interaction is direct. Interacts with MAPRE1; the interaction is direct, regulated by phosphorylation and is probably required for targeting to growing microtubule plus ends. Interacts with KIF18B at microtubule tips; this interaction increases the affinity of both partners for microtubule plus ends and is required for robust microtubule depolymerization. Phosphorylation by AURKA or AURKB strongly reduces KIF18B-binding. Phosphorylation by AURKB, regulates association with centromeres and kinetochores and the microtubule depolymerization activity. In terms of processing, ubiquitinated.

It is found in the cytoplasm. The protein localises to the cytoskeleton. It localises to the nucleus. Its subcellular location is the chromosome. The protein resides in the centromere. It is found in the kinetochore. Its function is as follows. In complex with KIF18B, constitutes the major microtubule plus-end depolymerizing activity in mitotic cells. Regulates the turnover of microtubules at the kinetochore and functions in chromosome segregation during mitosis. Plays a role in chromosome congression and is required for the lateral to end-on conversion of the chromosome-microtubule attachment. This chain is Kinesin-like protein KIF2C (KIF2C), found in Cricetulus griseus (Chinese hamster).